Consider the following 143-residue polypeptide: Transcriptional regulator MraZ (143 aa).

SpoVT-AbrB domains lie at E5 to V47 and A76 to N119.

This sequence belongs to the MraZ family. In terms of assembly, forms oligomers.

The protein resides in the cytoplasm. It is found in the nucleoid. The protein is Transcriptional regulator MraZ of Leuconostoc mesenteroides subsp. mesenteroides (strain ATCC 8293 / DSM 20343 / BCRC 11652 / CCM 1803 / JCM 6124 / NCDO 523 / NBRC 100496 / NCIMB 8023 / NCTC 12954 / NRRL B-1118 / 37Y).